A 501-amino-acid polypeptide reads, in one-letter code: Pre-mRNA-splicing factor 38B (501 aa).

Residues 1 to 11 show a composition bias toward low complexity; sequence MAGSQQQQQQQ. Disordered regions lie at residues 1 to 28 and 208 to 501; these read MAGSQQQQQQQAVSKPTGGKHGNNLPLW and DQHM…ADSP. Residues 243–273 are compositionally biased toward basic residues; that stretch reads GDKRRSRTPRRSPSPRKSQNRSRSRSHHRER. Residues 281–302 are a coiled coil; the sequence is ELERERDRQRKEREGKDRDRDR. Residues 281 to 328 are compositionally biased toward basic and acidic residues; it reads ELERERDRQRKEREGKDRDRDRDRDRERDRERDRDRRRSRTPDRNAER. Basic residues predominate over residues 329-341; that stretch reads RRSRSRERRRSRS. Over residues 342–408 the composition is skewed to basic and acidic residues; sequence TSRDKRTERK…EEKKHREEKR (67 aa). The segment covering 409–435 has biased composition (basic residues); it reads SKRSRSRSRDRKHKAERSSKKRSRSGS. Residues 437-447 are compositionally biased toward basic and acidic residues; sequence SRQEAGEEKNR. A compositionally biased stretch (basic residues) spans 448 to 468; sequence KRERSHSKDRQHKRSRSKERS. The span at 469–491 shows a compositional bias: basic and acidic residues; it reads HRRESSNERIHARQERPSSESGE. A compositionally biased stretch (polar residues) spans 492 to 501; the sequence is RTNSVRADSP.

Belongs to the PRP38 family.

The protein localises to the nucleus. May be required for pre-mRNA splicing. This Danio rerio (Zebrafish) protein is Pre-mRNA-splicing factor 38B (prpf38b).